The chain runs to 422 residues: MLRVRCLRGGSRGAEAAHFIGSRLGRAFTGWVQRSLQSTQAAAASQNRCAAEDKAQSPAPKECPVCSYNEWDPLEEVIVGRAENACVPPFSVEVKANTYEKYWGFYQKFGGESFPKDHVKKAIAEIEEMCNILKKEGVIVKRPDPIDWSVKYRTPDFESTGMYAAMPRDILLVVGNEIIEAPMAWRARFFEYRAYRRIIKDYFNNGAKWTTAPKPTMADELYDQDYPIRSVEDRHKLAAQGKFVTTEFEPCFDAADFIRAGRDIFVQRSQVTNYMGIEWMRRHLAPDYRVHVISFKDPNPMHIDTTFNIIGPGLVLSNPDRPCHQIELFKKAGWTVIHPPVPLIPDDHPLWMSSKWLSMNVLMLDEKRVMVDANETSIQKMFENLGISTIKVNIRHANSLGGGFHCWTCDIRRRGTLQSYFD.

Residues 1–37 (MLRVRCLRGGSRGAEAAHFIGSRLGRAFTGWVQRSLQ) constitute a mitochondrion transit peptide. Catalysis depends on residues Asp-253 and His-302. Cys-406 functions as the Amidino-cysteine intermediate in the catalytic mechanism. Thr-416 is modified (phosphothreonine).

This sequence belongs to the amidinotransferase family. As to quaternary structure, homodimer.

The protein resides in the mitochondrion inner membrane. It carries out the reaction L-arginine + glycine = guanidinoacetate + L-ornithine. Its pathway is amine and polyamine biosynthesis; creatine biosynthesis; creatine from L-arginine and glycine: step 1/2. Catalyzes the biosynthesis of guanidinoacetate, the immediate precursor of creatine. Creatine plays a vital role in energy metabolism in muscle tissues. May play a role in embryonic and central nervous system development. This is Glycine amidinotransferase, mitochondrial from Gallus gallus (Chicken).